Consider the following 191-residue polypeptide: Protein Ves (191 aa).

It belongs to the Ves family.

The chain is Protein Ves from Escherichia fergusonii (strain ATCC 35469 / DSM 13698 / CCUG 18766 / IAM 14443 / JCM 21226 / LMG 7866 / NBRC 102419 / NCTC 12128 / CDC 0568-73).